The following is a 123-amino-acid chain: Small ribosomal subunit protein uS12cz/uS12cy (123 aa).

This sequence belongs to the universal ribosomal protein uS12 family. As to quaternary structure, part of the 30S ribosomal subunit.

It is found in the plastid. Its subcellular location is the chloroplast. Functionally, with S4 and S5 plays an important role in translational accuracy. Located at the interface of the 30S and 50S subunits. The chain is Small ribosomal subunit protein uS12cz/uS12cy (rps12-A) from Nymphaea alba (White water-lily).